The primary structure comprises 389 residues: Flagellar P-ring protein (389 aa).

The signal sequence occupies residues 1 to 33; it reads MRPLVAARRRAAACCALAACMLALAFAPAAARA.

The protein belongs to the FlgI family. In terms of assembly, the basal body constitutes a major portion of the flagellar organelle and consists of four rings (L,P,S, and M) mounted on a central rod.

The protein localises to the periplasm. It localises to the bacterial flagellum basal body. In terms of biological role, assembles around the rod to form the L-ring and probably protects the motor/basal body from shearing forces during rotation. The sequence is that of Flagellar P-ring protein from Burkholderia mallei (strain ATCC 23344).